Reading from the N-terminus, the 289-residue chain is MYB transcription factor 69 (289 aa).

HTH myb-type domains are found at residues 9–61 (KAGV…TNYL) and 62–116 (RPGI…KKKL). 2 DNA-binding regions (H-T-H motif) span residues 37–61 (WRAV…TNYL) and 89–112 (WAAI…NTHL). Disordered stretches follow at residues 127-162 (APPR…ADST) and 225-252 (SSAI…QQQQ). Over residues 139–154 (ADCRRHDMTRSSKDSH) the composition is skewed to basic and acidic residues.

In terms of tissue distribution, mainly expressed in highly lignified tissues such as vascular tissues.

The protein resides in the nucleus. Functionally, transcription factor that binds to the promoter of MYB31 and MYB42 and activates directly their expression, thus repressing lignin biosynthesis. The chain is MYB transcription factor 69 from Zea mays (Maize).